Reading from the N-terminus, the 447-residue chain is ATP-dependent protease ATPase subunit HslU (447 aa).

ATP-binding positions include I18, 60–65 (GVGKTE), D259, E325, and R397.

This sequence belongs to the ClpX chaperone family. HslU subfamily. In terms of assembly, a double ring-shaped homohexamer of HslV is capped on each side by a ring-shaped HslU homohexamer. The assembly of the HslU/HslV complex is dependent on binding of ATP.

Its subcellular location is the cytoplasm. In terms of biological role, ATPase subunit of a proteasome-like degradation complex; this subunit has chaperone activity. The binding of ATP and its subsequent hydrolysis by HslU are essential for unfolding of protein substrates subsequently hydrolyzed by HslV. HslU recognizes the N-terminal part of its protein substrates and unfolds these before they are guided to HslV for hydrolysis. The polypeptide is ATP-dependent protease ATPase subunit HslU (Burkholderia cenocepacia (strain ATCC BAA-245 / DSM 16553 / LMG 16656 / NCTC 13227 / J2315 / CF5610) (Burkholderia cepacia (strain J2315))).